The sequence spans 42 residues: MRMIGLLYDFKDYASKMAENMARLAALLHYFSGDGGDISVTG.

The polypeptide is Protein YkgS (ykgS) (Escherichia coli (strain K12)).